Consider the following 152-residue polypeptide: Putative rho GDP-dissociation inhibitor 2 (152 aa).

It belongs to the Rho GDI family.

It localises to the cytoplasm. Regulates the GDP/GTP exchange reaction of the Rho proteins by inhibiting the dissociation of GDP from them, and the subsequent binding of GTP to them. This is Putative rho GDP-dissociation inhibitor 2 (rdiB) from Dictyostelium discoideum (Social amoeba).